Here is a 1379-residue protein sequence, read N- to C-terminus: MAERANLVFHNKVIDGTAIKRLISRLIDHFGMAYTSHILDQVKTLGFQQATATSISLGIDDLLTIPSKGWLVQDAEQQSLILEKHHHYGNVHAVEKLRQSIEIWYATSEYLRQEMNPNFRMTDPLNPVHMMSFSGARGNASQVHQLVGMRGLMSDPQGQMIDLPIQSNLREGLSLTEYIISCYGARKGVVDTAVRTSDAGYLTRRLVEVVQHIVVRRTDCGTIRGISVSPRNKNRMMSERIFIQTLIGRVLADDIYIGSRCVAFRNQDLGIGLVNRLITFGTQSISIRTPFTCRSTSWICRLCYGRSPTHGDLVELGEAVGIIAGQSIGEPGTQLTLRTFHTGGVFTGGTAEHVRAPYNGKIKFNEDLVHPTRTRHGHPAFLCYIDLSVIIESEDIIHSVTIPPKSFLLVQNDQYVESEQVIAEIREGTHTFHFKERVRKYIYSDSEGEMHWSTDVSHAPEFTYSNVHLLPKTSHLWILSGGSCGSSLILFSIHKDQDQMNIPFLSVERKSISSLSVNNDQVSQNFLSSDFADKKKSGIPHYSELNGNLGTSHYNFIYSAIFHENSDLLAKRRRNRFLIPFQSIQEQEKEFIPHSGISIEIPINGIFRRNSIFAFFDDPRYRRKSSGILKYGTLKADSIIQKEDMIEYRGVQKFKTKYEMKVDRFFFIPEEVHILPESSAIMVQNYSIIGVDTRITLNLRSRVGGLIRVERKKKRIELKIFSGDIHFPDKTDKISRHSGILIPPGRGKTNSKESKKLKNWIYVQRITPTKKKFFVLVRPVATYEIADSINLATLFPQDLFQEKDNIQLRVFNYILYGNGKPTRGISDTSIQLVRTCLVLNWDQENKNSSVEEVRAFFVEVSTKGLIRDFIRIGLVKSHMSYIRKRNNTPDSGLISADNMNPVYSISPKVGIFQQSLRQNHGTIRMFLNRNKESQSLLILSASNCFRIGPFNHVKYHNVINQSIKKNPLITIKNSPGPLGTSIQISNFFSFLPLLTYNLISVIKYLQLDNLKYIFQVINSYLIDENGRIFNLDPYNNVVLNPFKLNWYFLHKNYHHNYCEETSTIISLGQFFCENVCIAKNEPHLKSGQVLIVQRDSVVIRSAKPYLATPGAKVHGHYREILYEGDTLVTFIYEKSRSGDITQGLPKVEQVLEVRAIDSISLNLEKRIKGWNKCITRILGIPWGFLIGAELTIVQSRISLVNKIQKVYRSQGVQIHNRHIEIIVRQITSKVLVSEEGMSNVFLPGELIGLLRAERTGRALEEAICYRAVLLGITRASLNTQSFISEASFQETSRVLAKAALRGRIDWLKGLKENVVLGGVIPAGTGFNKGLVHCSRQYTNILLEKKKKNLSLFEGDMRDILFYHREFCDSSISKSDFSRI.

4 residues coordinate Zn(2+): cysteine 220, cysteine 293, cysteine 300, and cysteine 303.

It belongs to the RNA polymerase beta' chain family. RpoC2 subfamily. In plastids the minimal PEP RNA polymerase catalytic core is composed of four subunits: alpha, beta, beta', and beta''. When a (nuclear-encoded) sigma factor is associated with the core the holoenzyme is formed, which can initiate transcription. The cofactor is Zn(2+).

The protein localises to the plastid. The protein resides in the chloroplast. The catalysed reaction is RNA(n) + a ribonucleoside 5'-triphosphate = RNA(n+1) + diphosphate. In terms of biological role, DNA-dependent RNA polymerase catalyzes the transcription of DNA into RNA using the four ribonucleoside triphosphates as substrates. The chain is DNA-directed RNA polymerase subunit beta'' from Barbarea verna (Land cress).